Here is a 273-residue protein sequence, read N- to C-terminus: Bis(5'-nucleosyl)-tetraphosphatase, symmetrical (273 aa).

It belongs to the Ap4A hydrolase family.

The catalysed reaction is P(1),P(4)-bis(5'-adenosyl) tetraphosphate + H2O = 2 ADP + 2 H(+). Functionally, hydrolyzes diadenosine 5',5'''-P1,P4-tetraphosphate to yield ADP. The polypeptide is Bis(5'-nucleosyl)-tetraphosphatase, symmetrical (Histophilus somni (strain 129Pt) (Haemophilus somnus)).